We begin with the raw amino-acid sequence, 339 residues long: Adenosine deaminase (339 aa).

Zn(2+) contacts are provided by histidine 15 and histidine 17. 3 residues coordinate substrate: histidine 17, aspartate 19, and glycine 172. Histidine 199 is a Zn(2+) binding site. Glutamate 202 (proton donor) is an active-site residue. Aspartate 279 contributes to the Zn(2+) binding site.

This sequence belongs to the metallo-dependent hydrolases superfamily. Adenosine and AMP deaminases family. Adenosine deaminase subfamily. It depends on Zn(2+) as a cofactor.

It carries out the reaction adenosine + H2O + H(+) = inosine + NH4(+). It catalyses the reaction 2'-deoxyadenosine + H2O + H(+) = 2'-deoxyinosine + NH4(+). Functionally, catalyzes the hydrolytic deamination of adenosine and 2-deoxyadenosine. This chain is Adenosine deaminase, found in Lacticaseibacillus casei (strain BL23) (Lactobacillus casei).